The sequence spans 439 residues: 3-phosphoshikimate 1-carboxyvinyltransferase (439 aa).

Positions 29 and 34 each coordinate 3-phosphoshikimate. Lys-29 lines the phosphoenolpyruvate pocket. Residues Gly-99 and Arg-128 each contribute to the phosphoenolpyruvate site. Residues Ser-171, Ser-172, Gln-173, Ser-199, Asp-316, and Lys-343 each contribute to the 3-phosphoshikimate site. Gln-173 lines the phosphoenolpyruvate pocket. Asp-316 serves as the catalytic Proton acceptor. 3 residues coordinate phosphoenolpyruvate: Arg-347, Arg-390, and Lys-416.

This sequence belongs to the EPSP synthase family. Monomer.

It is found in the cytoplasm. It carries out the reaction 3-phosphoshikimate + phosphoenolpyruvate = 5-O-(1-carboxyvinyl)-3-phosphoshikimate + phosphate. Its pathway is metabolic intermediate biosynthesis; chorismate biosynthesis; chorismate from D-erythrose 4-phosphate and phosphoenolpyruvate: step 6/7. Catalyzes the transfer of the enolpyruvyl moiety of phosphoenolpyruvate (PEP) to the 5-hydroxyl of shikimate-3-phosphate (S3P) to produce enolpyruvyl shikimate-3-phosphate and inorganic phosphate. The sequence is that of 3-phosphoshikimate 1-carboxyvinyltransferase from Deinococcus radiodurans (strain ATCC 13939 / DSM 20539 / JCM 16871 / CCUG 27074 / LMG 4051 / NBRC 15346 / NCIMB 9279 / VKM B-1422 / R1).